The following is a 420-amino-acid chain: Argininosuccinate synthase (420 aa).

ATP-binding positions include 9–17 and Ala35; that span reads AYSGGLDTS. 2 residues coordinate L-citrulline: Tyr86 and Ser91. 114 to 122 lines the ATP pocket; sequence SHGCTGKGN. The L-aspartate site is built by Thr118, Asn122, and Asp123. Asn122 contacts L-citrulline. L-citrulline-binding residues include Arg126, Ser179, Ser188, Glu273, and Tyr285.

This sequence belongs to the argininosuccinate synthase family. Type 1 subfamily. Homotetramer.

It localises to the cytoplasm. It carries out the reaction L-citrulline + L-aspartate + ATP = 2-(N(omega)-L-arginino)succinate + AMP + diphosphate + H(+). It functions in the pathway amino-acid biosynthesis; L-arginine biosynthesis; L-arginine from L-ornithine and carbamoyl phosphate: step 2/3. Its function is as follows. Catalyzes the eighth step in arginine biosynthesis. Also has a catabolic function as the first enzyme of citrulline utilization as nitrogen source via arginine and the reactions involved in the arginase pathway. In Saccharomyces cerevisiae (strain ATCC 204508 / S288c) (Baker's yeast), this protein is Argininosuccinate synthase (ARG1).